A 158-amino-acid polypeptide reads, in one-letter code: 6,7-dimethyl-8-ribityllumazine synthase (158 aa).

Residues Phe22, 57–59, and 81–83 each bind 5-amino-6-(D-ribitylamino)uracil; these read AVE and AVI. Position 86–87 (86–87) interacts with (2S)-2-hydroxy-3-oxobutyl phosphate; that stretch reads GT. His89 (proton donor) is an active-site residue. Phe114 serves as a coordination point for 5-amino-6-(D-ribitylamino)uracil. (2S)-2-hydroxy-3-oxobutyl phosphate is bound at residue Arg128.

This sequence belongs to the DMRL synthase family. Forms an icosahedral capsid composed of 60 subunits, arranged as a dodecamer of pentamers.

It catalyses the reaction (2S)-2-hydroxy-3-oxobutyl phosphate + 5-amino-6-(D-ribitylamino)uracil = 6,7-dimethyl-8-(1-D-ribityl)lumazine + phosphate + 2 H2O + H(+). The protein operates within cofactor biosynthesis; riboflavin biosynthesis; riboflavin from 2-hydroxy-3-oxobutyl phosphate and 5-amino-6-(D-ribitylamino)uracil: step 1/2. Catalyzes the formation of 6,7-dimethyl-8-ribityllumazine by condensation of 5-amino-6-(D-ribitylamino)uracil with 3,4-dihydroxy-2-butanone 4-phosphate. This is the penultimate step in the biosynthesis of riboflavin. The chain is 6,7-dimethyl-8-ribityllumazine synthase from Shewanella pealeana (strain ATCC 700345 / ANG-SQ1).